A 633-amino-acid chain; its full sequence is Basic helix-loop-helix ARNT-like protein 1 (633 aa).

The tract at residues 1–65 is disordered; sequence MADQRMDISS…GMDTDKDDQH (65 aa). Ser17 carries the phosphoserine; by GSK3-beta modification. Positions 24–33 are enriched in polar residues; sequence ISSSLSTSGM. The Nuclear localization signal signature appears at 36–41; sequence NRKRKG. One can recognise a bHLH domain in the interval 79-132; that stretch reads NAREAHSQIEKRRRDKMNSFIDELASLVPTCNAMSRKLDKLTVLRMAVQHMKTL. Ser85 is subject to Phosphoserine. Position 97 is a phosphoserine; by CK2 (Ser97). The Nuclear export signal 1 signature appears at 149–159; it reads LSDDELKHLIL. A PAS 1 domain is found at 150-222; sequence SDDELKHLIL…EQLSSSDTAP (73 aa). A Glycyl lysine isopeptide (Lys-Gly) (interchain with G-Cter in SUMO2 and SUMO3) cross-link involves residue Lys259. A Glycyl lysine isopeptide (Lys-Gly) (interchain with G-Cter in SUMO) cross-link involves residue Lys266. The PAS 2 domain occupies 333-403; the sequence is PQPVNGEIRV…ECHRQVLQTR (71 aa). Positions 368 to 376 match the Nuclear export signal 2 motif; that stretch reads LAYLPQELL. Residues 408–451 enclose the PAC domain; it reads TNCYKFKIKDGSFITLRSRWFSFMNPWTKEVEYIVSTNTVVSTN. Disordered stretches follow at residues 472-499 and 518-555; these read SVLQAGEGGPKRTHPTVPGIPGGTRAGA and GSSPSSCGSSPLNITSTPPPDTSSPGGKKILNGGTPDI. A compositionally biased stretch (low complexity) spans 518–528; sequence GSSPSSCGSSP. The residue at position 545 (Lys545) is an N6-acetyllysine.

As to quaternary structure, component of the circadian clock oscillator which includes the CRY1/2 proteins, CLOCK or NPAS2, BMAL1 or BMAL2, CSNK1D and/or CSNK1E, TIMELESS and the PER1/2/3 proteins. Forms a heterodimer with CLOCK. The CLOCK-BMAL1 heterodimer is required for E-box-dependent transactivation, for CLOCK nuclear translocation and degradation, and, for phosphorylation of both CLOCK and BMAL1. Interacts with PER1, PER2, CRY1 and CRY2 and this interaction requires a translocation to the nucleus. Interaction of the CLOCK-BMAL1 heterodimer with PER or CRY inhibits transcription activation. Post-translationally, ubiquitinated, leading to its proteasomal degradation. Deubiquitinated by USP9X. O-glycosylated; contains O-GlcNAc. O-glycosylation by OGT prevents protein degradation by inhibiting ubiquitination. It also stabilizes the CLOCK-BMAL1 heterodimer thereby increasing CLOCK-BMAL1-mediated transcription of genes in the negative loop of the circadian clock such as PER1/2/3 and CRY1/2. In terms of processing, acetylated on Lys-545 by CLOCK during the repression phase of the circadian cycle. Acetylation facilitates recruitment of CRY1 protein and initiates the repression phase of the circadian cycle. Acetylated at Lys-545 by KAT5 during the activation phase of the cycle, leading to recruitment of the positive transcription elongation factor b (P-TEFb) and BRD4, followed by productive elongation of circadian transcripts. Deacetylated by SIRT1, which may result in decreased protein stability. Post-translationally, phosphorylated upon dimerization with CLOCK. Phosphorylation enhances the transcriptional activity, alters the subcellular localization and decreases the stability of the CLOCK-BMAL1 heterodimer by promoting its degradation. Phosphorylation shows circadian variations in the liver with a peak between CT10 to CT14. Phosphorylation at Ser-97 by CK2 is essential for its nuclear localization, its interaction with CLOCK and controls CLOCK nuclear entry. Dephosphorylation at Ser-85 is important for dimerization with CLOCK and transcriptional activity. Sumoylated on Lys-266 upon dimerization with CLOCK. Predominantly conjugated to poly-SUMO2/3 rather than SUMO1 and the level of these conjugates undergo rhythmic variation, peaking at CT9-CT12. Sumoylation localizes it exclusively to the PML body and promotes its ubiquitination in the PML body, ubiquitin-dependent proteasomal degradation and the transcriptional activity of the CLOCK-BMAL1 heterodimer. In terms of processing, undergoes lysosome-mediated degradation in a time-dependent manner in the liver.

Its subcellular location is the nucleus. The protein resides in the cytoplasm. It is found in the PML body. Its function is as follows. Transcriptional activator which forms a core component of the circadian clock. The circadian clock, an internal time-keeping system, regulates various physiological processes through the generation of approximately 24 hour circadian rhythms in gene expression, which are translated into rhythms in metabolism and behavior. It is derived from the Latin roots 'circa' (about) and 'diem' (day) and acts as an important regulator of a wide array of physiological functions including metabolism, sleep, body temperature, blood pressure, endocrine, immune, cardiovascular, and renal function. Consists of two major components: the central clock, residing in the suprachiasmatic nucleus (SCN) of the brain, and the peripheral clocks that are present in nearly every tissue and organ system. Both the central and peripheral clocks can be reset by environmental cues, also known as Zeitgebers (German for 'timegivers'). The predominant Zeitgeber for the central clock is light, which is sensed by retina and signals directly to the SCN. The central clock entrains the peripheral clocks through neuronal and hormonal signals, body temperature and feeding-related cues, aligning all clocks with the external light/dark cycle. Circadian rhythms allow an organism to achieve temporal homeostasis with its environment at the molecular level by regulating gene expression to create a peak of protein expression once every 24 hours to control when a particular physiological process is most active with respect to the solar day. Transcription and translation of core clock components (CLOCK, NPAS2, BMAL1, BMAL2, PER1, PER2, PER3, CRY1 and CRY2) plays a critical role in rhythm generation, whereas delays imposed by post-translational modifications (PTMs) are important for determining the period (tau) of the rhythms (tau refers to the period of a rhythm and is the length, in time, of one complete cycle). A diurnal rhythm is synchronized with the day/night cycle, while the ultradian and infradian rhythms have a period shorter and longer than 24 hours, respectively. Disruptions in the circadian rhythms contribute to the pathology of cardiovascular diseases, cancer, metabolic syndromes and aging. A transcription/translation feedback loop (TTFL) forms the core of the molecular circadian clock mechanism. Transcription factors, CLOCK or NPAS2 and BMAL1 or BMAL2, form the positive limb of the feedback loop, act in the form of a heterodimer and activate the transcription of core clock genes and clock-controlled genes (involved in key metabolic processes), harboring E-box elements (5'-CACGTG-3') within their promoters. The core clock genes: PER1/2/3 and CRY1/2 which are transcriptional repressors form the negative limb of the feedback loop and interact with the CLOCK|NPAS2-BMAL1|BMAL2 heterodimer inhibiting its activity and thereby negatively regulating their own expression. This heterodimer also activates nuclear receptors NR1D1/2 and RORA/B/G, which form a second feedback loop and which activate and repress BMAL1 transcription, respectively. The preferred binding motif for the CLOCK-BMAL1 heterodimer is 5'-CACGTGA-3', which contains a flanking adenine nucleotide at the 3-prime end of the canonical 6-nucleotide E-box sequence. CLOCK specifically binds to the half-site 5'-CAC-3', while BMAL1 binds to the half-site 5'-GTGA-3'. Essential for the rhythmic interaction of CLOCK with ASS1 and plays a critical role in positively regulating CLOCK-mediated acetylation of ASS1. Plays a role in protecting against lethal sepsis by limiting the expression of immune checkpoint protein CD274 in macrophages in a PKM2-dependent manner. In Tyto alba (Barn owl), this protein is Basic helix-loop-helix ARNT-like protein 1 (BMAL1).